A 2057-amino-acid polypeptide reads, in one-letter code: Rho guanine nucleotide exchange factor 17 (2057 aa).

Disordered stretches follow at residues glutamate 20–glycine 361, leucine 375–aspartate 461, and arginine 481–serine 559. Serine 142 and serine 152 each carry phosphoserine. The segment covering alanine 227–serine 249 has biased composition (low complexity). Residues serine 305 and serine 308 each carry the phosphoserine modification. The segment covering glycine 314–glycine 323 has biased composition (gly residues). Residues serine 324, serine 330, serine 377, serine 381, serine 389, serine 404, and serine 414 each carry the phosphoserine modification. Residues arginine 382–glutamate 391 are compositionally biased toward polar residues. Positions proline 440–asparagine 451 are enriched in basic and acidic residues. Serine 456 bears the Phosphoserine mark. Over residues glutamate 507–proline 524 the composition is skewed to low complexity. 2 positions are modified to phosphoserine: serine 538 and serine 611. 2 disordered regions span residues alanine 615–leucine 647 and leucine 663–alanine 952. Residues leucine 663 to histidine 672 are compositionally biased toward polar residues. At serine 689 the chain carries Phosphoserine. 2 positions are modified to phosphothreonine: threonine 692 and threonine 695. Residues proline 710–glutamate 719 show a composition bias toward polar residues. Serine 728 bears the Phosphoserine mark. The segment covering serine 747–threonine 760 has biased composition (polar residues). Positions serine 820 to glutamate 829 are enriched in basic and acidic residues. Serine 906 is subject to Phosphoserine. The segment covering leucine 909 to arginine 920 has biased composition (basic residues). Over residues serine 922 to glycine 931 the composition is skewed to basic and acidic residues. Positions glutamine 933–serine 944 are enriched in polar residues. Serine 953 and serine 994 each carry phosphoserine. The segment covering glycine 1015 to proline 1027 has biased composition (pro residues). Residues glycine 1015–lysine 1054 are disordered. One can recognise a DH domain in the interval methionine 1059 to glycine 1247. Position 1324 is a phosphoserine (serine 1324). Disordered regions lie at residues arginine 1555–glycine 1713 and cysteine 1983–asparagine 2050. Positions leucine 1579–alanine 1589 are enriched in acidic residues. Residues serine 1638–threonine 1674 show a composition bias toward low complexity.

Acts as a guanine nucleotide exchange factor (GEF) for RhoA GTPases. The protein is Rho guanine nucleotide exchange factor 17 (Arhgef17) of Mus musculus (Mouse).